The sequence spans 55 residues: Large ribosomal subunit protein bL33 (55 aa).

This sequence belongs to the bacterial ribosomal protein bL33 family.

The chain is Large ribosomal subunit protein bL33 from Aliivibrio fischeri (strain ATCC 700601 / ES114) (Vibrio fischeri).